Here is a 216-residue protein sequence, read N- to C-terminus: Somatotropin (216 aa).

Positions 1–26 (MAAGPRTSVLLAFALLCLPWTQEVGA) are cleaved as a signal peptide. H45 contributes to the Zn(2+) binding site. C78 and C189 form a disulfide bridge. S131 bears the Phosphoserine mark. A Zn(2+)-binding site is contributed by E198. C206 and C214 are oxidised to a cystine.

The protein belongs to the somatotropin/prolactin family.

The protein localises to the secreted. Its function is as follows. Plays an important role in growth control. Its major role in stimulating body growth is to stimulate the liver and other tissues to secrete IGF1. It stimulates both the differentiation and proliferation of myoblasts. It also stimulates amino acid uptake and protein synthesis in muscle and other tissues. The polypeptide is Somatotropin (GH1) (Hippopotamus amphibius (Hippopotamus)).